The following is a 173-amino-acid chain: Protein GrpE (173 aa).

The protein belongs to the GrpE family. Homodimer.

Its subcellular location is the cytoplasm. Functionally, participates actively in the response to hyperosmotic and heat shock by preventing the aggregation of stress-denatured proteins, in association with DnaK and GrpE. It is the nucleotide exchange factor for DnaK and may function as a thermosensor. Unfolded proteins bind initially to DnaJ; upon interaction with the DnaJ-bound protein, DnaK hydrolyzes its bound ATP, resulting in the formation of a stable complex. GrpE releases ADP from DnaK; ATP binding to DnaK triggers the release of the substrate protein, thus completing the reaction cycle. Several rounds of ATP-dependent interactions between DnaJ, DnaK and GrpE are required for fully efficient folding. This Campylobacter fetus subsp. fetus (strain 82-40) protein is Protein GrpE.